The following is a 207-amino-acid chain: N-(5'-phosphoribosyl)anthranilate isomerase (207 aa).

This sequence belongs to the TrpF family.

The catalysed reaction is N-(5-phospho-beta-D-ribosyl)anthranilate = 1-(2-carboxyphenylamino)-1-deoxy-D-ribulose 5-phosphate. Its pathway is amino-acid biosynthesis; L-tryptophan biosynthesis; L-tryptophan from chorismate: step 3/5. The chain is N-(5'-phosphoribosyl)anthranilate isomerase from Staphylococcus epidermidis (strain ATCC 35984 / DSM 28319 / BCRC 17069 / CCUG 31568 / BM 3577 / RP62A).